Reading from the N-terminus, the 583-residue chain is NEDD4-binding protein 2-like 2 (583 aa).

Residues 162–197 are a coiled coil; it reads NSEKSEIDNELFQFYKEIEELEKEKDGFENSCKESE. The segment at 549 to 575 is disordered; that stretch reads EPSHKSTQRPPPPQGRQRWGGSLGSHN.

This is NEDD4-binding protein 2-like 2 (N4BP2L2) from Homo sapiens (Human).